We begin with the raw amino-acid sequence, 471 residues long: MDNHSSVPWASAASVTCLSLDAKCHSSSSSSSSKSAASSISAIPQEETQTMRHIAHTQRCLSRLTSLVALLLIVLPMVFSPAHSCGPGRGLGRHRARNLYPLVLKQTIPNLSEYTNSASGPLEGVIRRDSPKFKDLVPNYNRDILFRDEEGTGADRLMSKRCKEKLNVLAYSVMNEWPGIRLLVTESWDEDYHHGQESLHYEGRAVTIATSDRDQSKYGMLARLAVEAGFDWVSYVSRRHIYCSVKSDSSISSHVHGCFTPESTALLESGVRKPLGELSIGDRVLSMTANGQAVYSEVILFMDRNLEQMQNFVQLHTDGGAVLTVTPAHLVSVWQPESQKLTFVFADRIEEKNQVLVRDVETGELRPQRVVKVGSVRSKGVVAPLTREGTIVVNSVAASCYAVINSQSLAHWGLAPMRLLSTLEAWLPAKEQLHSSPKVVSSAQQQNGIHWYANALYKVKDYVLPQSWRHD.

Cysteine 85 is lipidated: N-palmitoyl cysteine. Residues glutamate 149, glutamate 150, aspartate 155, threonine 185, glutamate 186, aspartate 189, and aspartate 191 each contribute to the Ca(2+) site. Glycine 257 is lipidated: Cholesterol glycine ester.

The protein belongs to the hedgehog family. In terms of assembly, interacts with shf. Interacts with ptc and CG5504/l(2)tid. In terms of processing, the C-terminal part of the hedgehog protein precursor displays an autoproteolysis activity that results in the cleavage of the full-length protein into two parts (N-product and C-product). In addition, the C-terminal part displays a cholesterol transferase activity that results by the covalent attachment of a cholesterol moiety to the C-terminal of the newly generated N-product. The N-product is the active species in both local and long-range signaling, whereas the C-product has no signaling activity. Post-translationally, cholesterylation is required for N-product targeting to lipid rafts and multimerization. N-palmitoylation by Rasp of the hedgehog N-product, within the secretory pathway, is required for the embryonic and larval patterning activities of the hedgehog signal. As to expression, in embryos, expression starts at stage 5 as a few stripes at the anterior and posterior ends, this expands to 17 stripes during stages 8-11. Expression is also seen in CNS and some PNS cells until stage 13-14, and in foregut, hindgut and salivary glands. In larvae, expression is seen in the posterior compartment of the wing, leg and antennal imaginal disks. In adults, high level of expression in specific regions of the proventriculus and hindgut, with slightly lower levels of expression in the posterior midgut. Relatively low levels of expression in the anterior midgut region.

It is found in the nucleus. The protein resides in the cytoplasm. Its subcellular location is the cell membrane. It catalyses the reaction glycyl-L-cysteinyl-[protein] + cholesterol + H(+) = [protein]-C-terminal glycyl cholesterol ester + N-terminal L-cysteinyl-[protein]. Its function is as follows. The C-terminal part of the hedgehog protein precursor displays an autoproteolysis activity that results in the cleavage of the full-length protein into two parts (N-product and C-product). In addition, the C-terminal part displays a cholesterol transferase activity that results by the covalent attachment of a cholesterol moiety to the C-terminal of the newly generated N-product. Once cleaved, the C-product has no signaling activity and diffuses from the cell. In terms of biological role, the dually lipidated hedgehog protein N-product is a morphogen which is essential for a variety of patterning events during development. Establishes the anterior-posterior axis of the embryonic segments and patterns the larval imaginal disks. Binds to the patched (ptc) receptor, which functions in association with smoothened (smo), to activate the transcription of target genes wingless (wg), decapentaplegic (dpp) and ptc. In the absence of hh, ptc represses the constitutive signaling activity of smo through fused (fu). Essential component of a signaling pathway which regulates the Duox-dependent gut immune response to bacterial uracil; required to activate Cad99C-dependent endosome formation, norpA-dependent Ca2+ mobilization and p38 MAPK, which are essential steps in the Duox-dependent production of reactive oxygen species (ROS) in response to intestinal bacterial infection. During photoreceptor differentiation, it up-regulates transcription of Ubr3, which in turn promotes the hh-signaling pathway by mediating the ubiquitination and degradation of cos. The chain is Protein hedgehog from Drosophila melanogaster (Fruit fly).